The primary structure comprises 66 residues: Surface composition regulator (66 aa).

The protein belongs to the GlgS family.

Major determinant of cell surface composition. Negatively regulates motility, adhesion and synthesis of biofilm exopolysaccharides. The chain is Surface composition regulator from Escherichia coli O139:H28 (strain E24377A / ETEC).